The sequence spans 485 residues: Aspartyl/glutamyl-tRNA(Asn/Gln) amidotransferase subunit B (485 aa).

Belongs to the GatB/GatE family. GatB subfamily. In terms of assembly, heterotrimer of A, B and C subunits.

The enzyme catalyses L-glutamyl-tRNA(Gln) + L-glutamine + ATP + H2O = L-glutaminyl-tRNA(Gln) + L-glutamate + ADP + phosphate + H(+). It catalyses the reaction L-aspartyl-tRNA(Asn) + L-glutamine + ATP + H2O = L-asparaginyl-tRNA(Asn) + L-glutamate + ADP + phosphate + 2 H(+). Allows the formation of correctly charged Asn-tRNA(Asn) or Gln-tRNA(Gln) through the transamidation of misacylated Asp-tRNA(Asn) or Glu-tRNA(Gln) in organisms which lack either or both of asparaginyl-tRNA or glutaminyl-tRNA synthetases. The reaction takes place in the presence of glutamine and ATP through an activated phospho-Asp-tRNA(Asn) or phospho-Glu-tRNA(Gln). This is Aspartyl/glutamyl-tRNA(Asn/Gln) amidotransferase subunit B from Anaplasma marginale (strain St. Maries).